The chain runs to 410 residues: Diguanylate cyclase DgcM (410 aa).

2 consecutive PAS domains span residues 3–70 (THNF…NQHD) and 129–198 (GFYA…HLPG). Residues 199–251 (GHKPLNFIHKLADGSTRHVQTYAGPIEIYGDKLMLCIVHDITEQKRLEEQLEH) enclose the PAC domain. A GGDEF domain is found at 283–410 (QDYSLLLIDT…NDGRNRVLAA (128 aa)). Position 291 (Asp291) interacts with Mg(2+). Residues Asn299, His304, and Asp308 each contribute to the substrate site. Position 334 (Glu334) interacts with Mg(2+). Residue Glu334 is the Proton acceptor of the active site.

Requires Mg(2+) as cofactor.

It catalyses the reaction 2 GTP = 3',3'-c-di-GMP + 2 diphosphate. It functions in the pathway purine metabolism; 3',5'-cyclic di-GMP biosynthesis. Its function is as follows. Part of a signaling cascade that regulates curli biosynthesis. The cascade is composed of two cyclic-di-GMP (c-di-GMP) control modules, in which c-di-GMP controlled by the DgcE/PdeH pair (module I) regulates the activity of the DgcM/PdeR pair (module II), which in turn regulates activity of the transcription factor MlrA and expression of the master biofilm regulator csgD. This is Diguanylate cyclase DgcM from Escherichia coli O157:H7.